The primary structure comprises 910 residues: Protein CHROMATIN REMODELING 25 (910 aa).

Composition is skewed to acidic residues over residues 1–18 (MEEE…DDSS) and 26–39 (QDSE…ECED). Residues 1–39 (MEEEDEEILSSSDCDDSSDSYKDDSQDSEGENDNPECED) form a disordered region. Residues 198–371 (LHGSANINGC…FAMVNFTNPG (174 aa)) form the Helicase ATP-binding domain. ATP is bound at residue 211–218 (DDMGLGKT). Positions 322–325 (DEAH) match the DEAH box motif. A coiled-coil region spans residues 396–417 (TEEEKNLAADRSAELSSKVNQF). A Helicase C-terminal domain is found at 538–696 (VLSRLLANLR…QTDNSTRQGN (159 aa)). The disordered stretch occupies residues 828–861 (VSPKTVESEEHNRNQPVNKRAFNKPQQRPREPLQ).

It belongs to the SNF2/RAD54 helicase family. Interacts with RAD51. Binds to the geminivirus mungbean yellow mosaic virus (MYMV) and to the tomato leaf curl virus (ToLCV) replication-associated proteins. In terms of tissue distribution, expressed ubiquitously, with the highest levels of expression in flower buds. Present in flower buds (at protein level).

The protein localises to the nucleus. Dissociates RAD51 from nucleoprotein filaments formed on dsDNA. Could be involved in the turnover of RAD51 protein-dsDNA filaments. Addition of RAD54 overcomes inhibition of DNA strand exchange by RAD51 bound to substrate dsDNA. Species preference in the RAD51 dissociation and DNA strand exchange assays underlines the importance of specific RAD54-RAD51 interactions. RAD51 is unable to release dsDNA upon ATP hydrolysis, leaving it stuck on the heteroduplex DNA product after DNA strand exchange. Involved in DNA repair and mitotic recombination. Functions in the homologous recombinational DNA repair (RAD52) pathway. Required for synthesis-dependent strand annealing (SDSA) during double-strand break repair. Functionally, facilitates geminiviral replication (e.g. geminivirus mungbean yellow mosaic virus (MYMV) and tomato leaf curl virus (ToLCV)). This Arabidopsis thaliana (Mouse-ear cress) protein is Protein CHROMATIN REMODELING 25 (CHR25).